Here is a 317-residue protein sequence, read N- to C-terminus: Putative peptide import ATP-binding protein BruAb2_0797 (317 aa).

Positions 7–250 (LSVRGLAKHY…PQHPYTRALL (244 aa)) constitute an ABC transporter domain. Residue 43–50 (GESGSGKT) coordinates ATP.

It belongs to the ABC transporter superfamily. In terms of assembly, the complex is composed of two ATP-binding proteins (BruAb2_0796 and BruAb2_0797), two transmembrane proteins (BruAb2_0794) and a solute-binding protein (BruAb2_0792).

It localises to the cell inner membrane. Functionally, probably part of an ABC transporter complex that could be involved in peptide import. Probably responsible for energy coupling to the transport system. This is Putative peptide import ATP-binding protein BruAb2_0797 from Brucella abortus biovar 1 (strain 9-941).